A 305-amino-acid polypeptide reads, in one-letter code: Probable cell division protein WhiA (305 aa).

Positions 269 to 302 (TIKELGELLEPSLGKSGVNHRLRKLVEQANELRK) form a DNA-binding region, H-T-H motif.

Belongs to the WhiA family.

Its function is as follows. Involved in cell division and chromosome segregation. The polypeptide is Probable cell division protein WhiA (Lactococcus lactis subsp. lactis (strain IL1403) (Streptococcus lactis)).